The following is a 351-amino-acid chain: Glycerol-1-phosphate dehydrogenase [NAD(P)+] (351 aa).

NAD(+) is bound by residues 97-101 (GTVID) and 119-122 (TSPS). Asp-124 contributes to the substrate binding site. Ser-128 is an NAD(+) binding site. Asp-171 serves as a coordination point for substrate. Zn(2+)-binding residues include Asp-171 and His-251. His-255 provides a ligand contact to substrate. Position 267 (His-267) interacts with Zn(2+).

The protein belongs to the glycerol-1-phosphate dehydrogenase family. In terms of assembly, homodimer. Zn(2+) is required as a cofactor.

It localises to the cytoplasm. It catalyses the reaction sn-glycerol 1-phosphate + NAD(+) = dihydroxyacetone phosphate + NADH + H(+). The catalysed reaction is sn-glycerol 1-phosphate + NADP(+) = dihydroxyacetone phosphate + NADPH + H(+). Its pathway is membrane lipid metabolism; glycerophospholipid metabolism. Its function is as follows. Catalyzes the NAD(P)H-dependent reduction of dihydroxyacetonephosphate (DHAP or glycerone phosphate) to glycerol 1-phosphate (G1P). The G1P thus generated is used as the glycerophosphate backbone of phospholipids in the cellular membranes of Archaea. The chain is Glycerol-1-phosphate dehydrogenase [NAD(P)+] from Sulfolobus acidocaldarius (strain ATCC 33909 / DSM 639 / JCM 8929 / NBRC 15157 / NCIMB 11770).